The following is a 130-amino-acid chain: Small ribosomal subunit protein uS8 (130 aa).

Belongs to the universal ribosomal protein uS8 family.

The sequence is that of Small ribosomal subunit protein uS8 (RPS22) from Candida glabrata (strain ATCC 2001 / BCRC 20586 / JCM 3761 / NBRC 0622 / NRRL Y-65 / CBS 138) (Yeast).